Here is a 170-residue protein sequence, read N- to C-terminus: Large ribosomal subunit protein uL10 (170 aa).

Belongs to the universal ribosomal protein uL10 family. Part of the ribosomal stalk of the 50S ribosomal subunit. The N-terminus interacts with L11 and the large rRNA to form the base of the stalk. The C-terminus forms an elongated spine to which L12 dimers bind in a sequential fashion forming a multimeric L10(L12)X complex.

Forms part of the ribosomal stalk, playing a central role in the interaction of the ribosome with GTP-bound translation factors. The protein is Large ribosomal subunit protein uL10 of Chlamydia abortus (strain DSM 27085 / S26/3) (Chlamydophila abortus).